The chain runs to 301 residues: Phosducin-like protein (301 aa).

An N-acetylthreonine modification is found at threonine 2. The interval 18-57 (SSSEDEDSDHEDKDRGRCAPASSSVPAEAELAGEGISVNT) is disordered. Residues serine 20 and serine 25 each carry the phosphoserine modification. Residues 36–49 (APASSSVPAEAELA) are compositionally biased toward low complexity. The region spanning 36–299 (APASSSVPAE…TCHSEDSDLE (264 aa)) is the Phosducin domain. Residues serine 226, serine 293, and serine 296 each carry the phosphoserine modification.

This sequence belongs to the phosducin family. As to quaternary structure, forms a complex with the beta and gamma subunits of the GTP-binding protein, transducin. Interacts with the CCT chaperonin complex.

Its subcellular location is the cell projection. The protein localises to the cilium. Acts as a positive regulator of hedgehog signaling and regulates ciliary function. Its function is as follows. Functions as a co-chaperone for CCT in the assembly of heterotrimeric G protein complexes, facilitates the assembly of both Gbeta-Ggamma and RGS-Gbeta5 heterodimers. In terms of biological role, acts as a negative regulator of heterotrimeric G proteins assembly by trapping the preloaded G beta subunits inside the CCT chaperonin. The polypeptide is Phosducin-like protein (PDCL) (Homo sapiens (Human)).